Consider the following 488-residue polypeptide: C2H2-type transcription factor MSN2 (488 aa).

2 consecutive C2H2-type zinc fingers follow at residues 376–399 (FVCDLCNRRFRRQEHLKRHYRSLH) and 405–427 (FECNECGKKFSRSDNLAQHARTH).

It localises to the nucleus. The protein localises to the cytoplasm. In terms of biological role, transcription factor that acts as a key downstream transcription factor in the HOG1-MAPK pathway. Plays crucial roles in the regulation of conidiation, virulence and multi-stress responses. Acts as a negative regulator of proteases, lipases, as well as of the red-pigmented oosporein production, and contributes to virulence and growth in response to external pH. Contributes to the ability to infect Rhipicephalus microplus (Acari, Ixodidae) via the cuticle-penetration requiring route involving proteolytic activity at the host cuticle. Does not seem to be involved in subsequent growth and proliferation once the tick cuticle has been breached. The protein is C2H2-type transcription factor MSN2 of Beauveria bassiana (strain ARSEF 2860) (White muscardine disease fungus).